The sequence spans 309 residues: Elongation factor Ts (309 aa).

The involved in Mg(2+) ion dislocation from EF-Tu stretch occupies residues 82 to 85 (TDFV).

Belongs to the EF-Ts family.

Its subcellular location is the cytoplasm. Its function is as follows. Associates with the EF-Tu.GDP complex and induces the exchange of GDP to GTP. It remains bound to the aminoacyl-tRNA.EF-Tu.GTP complex up to the GTP hydrolysis stage on the ribosome. The sequence is that of Elongation factor Ts (tsf) from Rickettsia prowazekii (strain Madrid E).